The following is a 320-amino-acid chain: 4-hydroxythreonine-4-phosphate dehydrogenase (320 aa).

Position 132 (threonine 132) interacts with substrate. A divalent metal cation contacts are provided by histidine 161, histidine 205, and histidine 258. Lysine 266, asparagine 275, and arginine 284 together coordinate substrate.

Belongs to the PdxA family. Homodimer. The cofactor is a divalent metal cation.

The protein resides in the cytoplasm. The catalysed reaction is 4-(phosphooxy)-L-threonine + NAD(+) = 3-amino-2-oxopropyl phosphate + CO2 + NADH. It participates in cofactor biosynthesis; pyridoxine 5'-phosphate biosynthesis; pyridoxine 5'-phosphate from D-erythrose 4-phosphate: step 4/5. Its function is as follows. Catalyzes the NAD(P)-dependent oxidation of 4-(phosphooxy)-L-threonine (HTP) into 2-amino-3-oxo-4-(phosphooxy)butyric acid which spontaneously decarboxylates to form 3-amino-2-oxopropyl phosphate (AHAP). The chain is 4-hydroxythreonine-4-phosphate dehydrogenase from Aquifex aeolicus (strain VF5).